Reading from the N-terminus, the 1024-residue chain is Nardilysin-like (1024 aa).

The interval 41 to 103 (PDIYPEGSVP…DEVKGKGDHQ (63 aa)) is disordered. The segment covering 52–95 (QIDEDDEDGEEEDSDGSSEDDDDDEDDEEDGEGDEEDEDEDEDE) has biased composition (acidic residues). H129 contributes to the Zn(2+) binding site. E132 (proton acceptor) is an active-site residue. Position 133 (H133) interacts with Zn(2+). E203 is a catalytic residue. E210 provides a ligand contact to Zn(2+).

The protein belongs to the peptidase M16 family. Requires Zn(2+) as cofactor.

It catalyses the reaction Hydrolysis of polypeptides, preferably at -Xaa-|-Arg-Lys-, and less commonly at -Arg-|-Arg-Xaa-, in which Xaa is not Arg or Lys.. Functionally, cleaves peptide substrates on the N-terminus of arginine residues in dibasic pairs. The chain is Nardilysin-like from Arabidopsis thaliana (Mouse-ear cress).